The following is a 202-amino-acid chain: FMN-dependent NADH:quinone oxidoreductase (202 aa).

Residues S10 and 95–98 (MYNF) each bind FMN.

It belongs to the azoreductase type 1 family. As to quaternary structure, homodimer. The cofactor is FMN.

It catalyses the reaction 2 a quinone + NADH + H(+) = 2 a 1,4-benzosemiquinone + NAD(+). The catalysed reaction is N,N-dimethyl-1,4-phenylenediamine + anthranilate + 2 NAD(+) = 2-(4-dimethylaminophenyl)diazenylbenzoate + 2 NADH + 2 H(+). Functionally, quinone reductase that provides resistance to thiol-specific stress caused by electrophilic quinones. In terms of biological role, also exhibits azoreductase activity. Catalyzes the reductive cleavage of the azo bond in aromatic azo compounds to the corresponding amines. The sequence is that of FMN-dependent NADH:quinone oxidoreductase from Pseudoalteromonas atlantica (strain T6c / ATCC BAA-1087).